Consider the following 590-residue polypeptide: EGF-like and EMI domain-containing protein 1 (590 aa).

Residues 1-23 (MTSPLCFWCFCVWAAANWPPGSA) form the signal peptide. The region spanning 44 to 104 (LSRPCAQAFI…RCCPGWIQWD (61 aa)) is the EMI domain. Positions 105-145 (DEPGCFSSLSSLGTHFSGRECSYQDTRQCLCSQGFHGPHCQ) constitute an EGF-like 1 domain. 11 cysteine pairs are disulfide-bonded: Cys-109–Cys-125, Cys-135–Cys-144, Cys-168–Cys-179, Cys-175–Cys-188, Cys-190–Cys-203, Cys-209–Cys-219, Cys-215–Cys-228, Cys-230–Cys-243, Cys-249–Cys-260, Cys-256–Cys-269, and Cys-271–Cys-284. Positions 164-204 (NVDECAVVNGGCQQRCINTLGTFHCECDTGYRRHADERTCI) constitute an EGF-like 2; calcium-binding domain. The 40-residue stretch at 205-244 (KTDPCAGANGCAHLCQTENGMARCACHAGYQLSEDKKACE) folds into the EGF-like 3 domain. In terms of domain architecture, EGF-like 4; calcium-binding spans 245–285 (DINECAGELAPCAHHCVNSKGSFTCTCHPGFELGADRKHCY). The segment at 393–424 (RLAQNPPQPFPYLDPSLTASYEDEDNDDADSE) is disordered. Residues 413 to 424 (YEDEDNDDADSE) are compositionally biased toward acidic residues. The EGF-like 5 domain maps to 445–481 (FGLDCSLSCEDCMNGGRCQEGKSGCLCPAEWTGLICN). Cystine bridges form between Cys-449/Cys-462, Cys-456/Cys-469, and Cys-471/Cys-480.

This is EGF-like and EMI domain-containing protein 1 (Egfem1) from Mus musculus (Mouse).